Here is a 646-residue protein sequence, read N- to C-terminus: Esterase EstA (646 aa).

Positions 1–24 (MIRMALKPLVAACLLASLSTAPQA) are cleaved as a signal peptide. Topologically, residues 25–397 (APSPYSTLVV…DSAASGDGNG (373 aa)) are extracellular. Residue S38 is the Nucleophile of the active site. Residues D310 and H313 contribute to the active site. One can recognise an Autotransporter domain in the interval 366–646 (QNVGQWRGFV…SVSLALSLDF (281 aa)). The chain crosses the membrane as a beta stranded span at residues 398–408 (YNLTLGGSYRI). The Periplasmic portion of the chain corresponds to 409–410 (DE). A beta stranded transmembrane segment spans residues 411–421 (AWRAGVAAGFY). Residues 422–437 (RQKLEAGAKDSDYRMN) are Extracellular-facing. The chain crosses the membrane as a beta stranded span at residues 438-447 (SYMASAFVQY). Topologically, residues 448-451 (QENR) are periplasmic. A beta stranded transmembrane segment spans residues 452-461 (WWADAALTGG). The Extracellular portion of the chain corresponds to 462-488 (YLDYDDLKRKFALGGGERSEKGDTNGH). Residues 489-500 (LWAFSARLGYDI) traverse the membrane as a beta stranded segment. Over 501 to 507 (AQQADSP) the chain is Periplasmic. The chain crosses the membrane as a beta stranded span at residues 508-518 (WHLSPFVSADY). The Extracellular segment spans residues 519-547 (ARVEVDGYSEKGASATALDYDDQKRSSKR). Residues 548–558 (LGAGLQGKYAF) traverse the membrane as a beta stranded segment. The Periplasmic portion of the chain corresponds to 559–561 (GSD). A beta stranded membrane pass occupies residues 562–571 (TQLFAEYAHE). Residues 572-605 (REYEDDTQDLTMSLNSLPGNRFTLEGYTPQDHLN) lie on the Extracellular side of the membrane. The chain crosses the membrane as a beta stranded span at residues 606 to 615 (RVSLGFSQKL). Over 616–618 (APE) the chain is Periplasmic. Residues 619–628 (LSLRGGYNWR) traverse the membrane as a beta stranded segment. Residues 629–636 (KGEDDTQQ) are Extracellular-facing. Residues 637 to 646 (SVSLALSLDF) form a beta stranded membrane-spanning segment.

Belongs to the 'GDSL' lipolytic enzyme family.

It is found in the cell outer membrane. It catalyses the reaction a carboxylic ester + H2O = an alcohol + a carboxylate + H(+). Esterase whose enzymatic activity is required for rhamnolipid production, all kinds of cell motility (swimming, swarming, and twitching), and biofilm formation; the exact role of EstA in these processes is unclear. In vitro, has pronounced esterase activities towards p-nitrophenyl esters of short acyl chain length (C4-C6) and Tween detergents. Also shows relatively high activity towards beta-naphthyl butyrate, whereas its activities towards triacylglycerols and acyls-CoA are negligible. This chain is Esterase EstA (estA), found in Pseudomonas aeruginosa (strain ATCC 15692 / DSM 22644 / CIP 104116 / JCM 14847 / LMG 12228 / 1C / PRS 101 / PAO1).